The following is a 496-amino-acid chain: Zinc finger and SCAN domain-containing protein 5C (496 aa).

Polar residues predominate over residues 1 to 19 (MAANCTSSWSLGESCNSPG). Positions 1 to 38 (MAANCTSSWSLGESCNSPGSEPPQSMPSPATQLGNHDS) are disordered. In terms of domain architecture, SCAN box spans 44–126 (HVNFRMFSCP…DLLRNNRRPK (83 aa)). Disordered stretches follow at residues 149-188 (EAPA…TLPR) and 203-347 (PETT…HPSG). The segment covering 161-171 (VSSQRTSSVNQ) has biased composition (polar residues). Residues 210-223 (GDPKALRPKPTLEK) show a composition bias toward basic and acidic residues. Positions 234–247 (GLTSPEPQLPNSPT) are enriched in polar residues. Residues 253–263 (KEGKEPQKRAS) show a composition bias toward basic and acidic residues. 5 C2H2-type zinc fingers span residues 356–378 (FACE…TRSH), 384–406 (FQCN…QRTH), 412–434 (YTCD…KRSH), 440–462 (FECK…QRIH), and 468–490 (HKCS…QKTH).

It localises to the nucleus. Its function is as follows. May be involved in transcriptional regulation. This chain is Zinc finger and SCAN domain-containing protein 5C, found in Homo sapiens (Human).